The chain runs to 766 residues: Slit homolog 2 protein (766 aa).

The first 30 residues, 1–30 (MSGIGWQTLSLSLALVLSILNKVAPHACPA), serve as a signal peptide directing secretion. Positions 31–55 (QCSCSGSTVDCHGLALRIVPRNIPR) constitute an LRRNT domain. 6 LRR repeats span residues 56–77 (NTER…DFAG), 80–101 (HLRI…AFHD), 104–125 (ELER…LFLG), 128–149 (KLYR…AFRG), 152–173 (DIKN…AFRA), and 176–197 (DLEV…SFNH). N66 carries an N-linked (GlcNAc...) asparagine glycan. N186 is a glycosylation site (N-linked (GlcNAc...) asparagine). Residues 209–259 (NNLYCDCHLAWLSDWLRQRPRVGLYTQCMGPSHLRGHNVAEVQKREFVCSD) enclose the LRRCT 1 domain. The LRRNT 2 domain occupies 268–304 (MAPSCSVLHCPIACTCSNNIVDCRGKGLTEIPTNLPE). A disulfide bond links C281 and C290. LRR repeat units follow at residues 305–326 (TITE…AFSP), 329–350 (KLRR…AFQG), 353–374 (SLNS…LFEG), 377–398 (SLQL…AFQD), and 401–422 (NLNL…TFSA). The 51-residue stretch at 434-484 (NPFICDCHLKWLADYLHTNPIETSGARCTSPRRLANKRIGQIKSKKFRCSG) folds into the LRRCT 2 domain. 4 disulfides stabilise this stretch: C438-C461, C440-C482, C502-C508, and C506-C515. An LRRNT 3 domain is found at 493–529 (SGDCFADLACPEKCRCEGTTVDCSNQKLNKIPDHIPQ). LRR repeat units follow at residues 530-551 (YTAE…GIFK), 555-576 (QLRK…AFEG), 579-600 (GVNE…MFKG), 603-624 (SLKT…SFTG), and 627-648 (SVRL…AFGT). N560 is a glycosylation site (N-linked (GlcNAc...) asparagine). A glycan (N-linked (GlcNAc...) asparagine) is linked at N619. The LRRCT 3 domain occupies 660 to 710 (NPFNCNCHLAWLGEWLRRKRIVTGNPRCQKPYFLKEIPIQDVAIQDFTCDD). Disulfide bonds link C664–C687, C666–C708, C723–C729, and C727–C736. The region spanning 714–750 (DNSCSPLSRCPSECTCLDTVVRCSNKGLKVLPKGIPR) is the LRRNT 4 domain.

In terms of assembly, homodimer. Binds ROBO1 and ROBO2 with high affinity. Interacts with GREM1.

It is found in the secreted. Its function is as follows. Thought to act as molecular guidance cue in cellular migration, and function appears to be mediated by interaction with roundabout homolog receptors. During neural development involved in axonal navigation at the ventral midline of the neural tube and projection of axons to different regions. SLIT1 and SLIT2 seem to be essential for midline guidance in the forebrain by acting as repulsive signal preventing inappropriate midline crossing by axons projecting from the olfactory bulb. In spinal cord development may play a role in guiding commissural axons once they reached the floor plate by modulating the response to netrin. In vitro, silences the attractive effect of NTN1 but not its growth-stimulatory effect and silencing requires the formation of a ROBO1-DCC complex. May be implicated in spinal cord midline post-crossing axon repulsion. In vitro, only commissural axons that crossed the midline responded to SLIT2. In the developing visual system appears to function as repellent for retinal ganglion axons by providing a repulsion that directs these axons along their appropriate paths prior to, and after passage through, the optic chiasm. In vitro, collapses and repels retinal ganglion cell growth cones. Seems to play a role in branching and arborization of CNS sensory axons, and in neuronal cell migration. Seems to be involved in regulating leukocyte migration. The protein is Slit homolog 2 protein (Slit2) of Rattus norvegicus (Rat).